A 589-amino-acid chain; its full sequence is Deoxynucleoside triphosphate triphosphohydrolase SAMHD1 (589 aa).

M1 carries the post-translational modification N-acetylmethionine. Positions 1-10 (MQSADSQNTP) are enriched in polar residues. The tract at residues 1-41 (MQSADSQNTPKRPRRDGSPRTPPDSPLADAETSPSHDLDPD) is disordered. At S18 the chain carries Phosphoserine. Position 21 is a phosphothreonine (T21). Phosphoserine is present on residues S33 and S88. One can recognise an SAM domain in the interval 45-100 (WGPEQVWSFLRRCGFSDSELLKRCREKRMSGSLLPFPEDLGISSHGKKMKLLNCIQ). Positions 104 and 105 each coordinate GTP. N107 contributes to the dGTP binding site. The GTP site is built by D125, Q130, and R133. Residues Q137, L138, V144, and R152 each contribute to the dGTP site. Q137 is a binding site for dATP. Q137 contributes to the dCTP binding site. Residue Q137 coordinates dTTP. A dATP-binding site is contributed by R152. R152 provides a ligand contact to dCTP. Position 152 (R152) interacts with dTTP. The HD domain occupies 152-277 (RFEHSLGVGY…IKDASKWLYK (126 aa)). Residues H155, H194, and D195 each contribute to the Mn(2+) site. The dATP site is built by H198 and H203. H198 and H203 together coordinate dCTP. 2 residues coordinate dTTP: H198 and H203. H221 is a catalytic residue. A Mn(2+)-binding site is contributed by D300. 12 residues coordinate dGTP: K301, Y304, D308, R322, R341, K343, N347, R355, Y363, Q364, H365, and K366. Residues K301, Y304, and D308 each coordinate dATP. Positions 301, 304, and 308 each coordinate dCTP. DTTP contacts are provided by K301, Y304, and D308. R355 contributes to the dATP binding site. Residue R355 participates in dCTP binding. Q364 is a dATP binding site. Q364 contributes to the dCTP binding site. Q364 contacts dTTP. 2 residues coordinate GTP: R440 and K444. K457 participates in a covalent cross-link: Glycyl lysine isopeptide (Lys-Gly) (interchain with G-Cter in SUMO2). K512 contributes to the GTP binding site. Residue K512 participates in dGTP binding.

The protein belongs to the SAMHD1 family. In terms of assembly, homodimer; in absence of GTP and dNTP. Homotetramer; in GTP- and dNTP-bound form. Interacts with MRE11; leading to stimulate the exonuclease activity of MRE11. Interacts with RBBP8/CtIP. Interacts (via its C-terminus) with CD81. The cofactor is Zn(2+).

The protein localises to the nucleus. Its subcellular location is the chromosome. It catalyses the reaction a 2'-deoxyribonucleoside 5'-triphosphate + H2O = a 2'-deoxyribonucleoside + triphosphate + H(+). The enzyme catalyses dATP + H2O = 2'-deoxyadenosine + triphosphate + H(+). The catalysed reaction is dCTP + H2O = 2'-deoxycytidine + triphosphate + H(+). It carries out the reaction dGTP + H2O = 2'-deoxyguanosine + triphosphate + H(+). It catalyses the reaction dTTP + H2O = thymidine + triphosphate + H(+). With respect to regulation, allosterically activated and regulated via the combined actions of GTP and dNTPs (dATP, dGTP, dTTP and dCTP): Allosteric site 1 binds GTP, while allosteric site 2 binds dNTP. Allosteric activation promotes the formation of highly active homotetramers. In terms of biological role, protein that acts both as a host restriction factor involved in defense response to virus and as a regulator of DNA end resection at stalled replication forks. Has deoxynucleoside triphosphate (dNTPase) activity, which is required to restrict infection by viruses: dNTPase activity reduces cellular dNTP levels to levels too low for retroviral reverse transcription to occur, blocking early-stage virus replication in dendritic and other myeloid cells. Likewise, suppresses LINE-1 retrotransposon activity. In addition to virus restriction, dNTPase activity acts as a regulator of DNA precursor pools by regulating dNTP pools. Functions during S phase at stalled DNA replication forks to promote the resection of gapped or reversed forks: acts by stimulating the exonuclease activity of MRE11, activating the ATR-CHK1 pathway and allowing the forks to restart replication. Its ability to promote degradation of nascent DNA at stalled replication forks is required to prevent induction of type I interferons, thereby preventing chronic inflammation. Ability to promote DNA end resection at stalled replication forks is independent of dNTPase activity. Enhances immunoglobulin hypermutation in B-lymphocytes by promoting transversion mutation. This is Deoxynucleoside triphosphate triphosphohydrolase SAMHD1 from Bos taurus (Bovine).